Here is a 347-residue protein sequence, read N- to C-terminus: Protein-glutamate methylesterase/protein-glutamine glutaminase (347 aa).

In terms of domain architecture, Response regulatory spans 3-119 (EALVVDDSHF…STELSGHSEE (117 aa)). Aspartate 53 carries the 4-aspartylphosphate modification. The disordered stretch occupies residues 132–154 (PTAGHDVEMEPASPPDATTSEYA). In terms of domain architecture, CheB-type methylesterase spans 152–346 (EYADNPTLLI…EAIADSIRRT (195 aa)). Catalysis depends on residues serine 164, histidine 191, and aspartate 288.

It belongs to the CheB family. Post-translationally, phosphorylated by CheA. Phosphorylation of the N-terminal regulatory domain activates the methylesterase activity.

It localises to the cytoplasm. The catalysed reaction is [protein]-L-glutamate 5-O-methyl ester + H2O = L-glutamyl-[protein] + methanol + H(+). It carries out the reaction L-glutaminyl-[protein] + H2O = L-glutamyl-[protein] + NH4(+). Its function is as follows. Involved in the modulation of the chemotaxis system; catalyzes the demethylation of specific methylglutamate residues introduced into the Htr transducer proteins (methyl-accepting chemotaxis proteins) by CheR. Also required for Htr deamidations, at least at a specific glutamine-glutamate pair in HTR-II and a specific aspartate-glutamine pair in Htr4. The sequence is that of Protein-glutamate methylesterase/protein-glutamine glutaminase from Halobacterium salinarum (strain ATCC 29341 / DSM 671 / R1).